The chain runs to 130 residues: Peptidyl-prolyl cis-trans isomerase pin4 (130 aa).

The segment at 1–38 (MGKDKKASGSGSGSKGGKDAGNKDAGKDAGKASKGAQS) is disordered. Residues 16–31 (GGKDAGNKDAGKDAGK) show a composition bias toward basic and acidic residues. The PpiC domain maps to 36–128 (AQSINVRHIL…FGYHIIMVEG (93 aa)).

This sequence belongs to the PpiC/parvulin rotamase family. PIN4 subfamily.

It carries out the reaction [protein]-peptidylproline (omega=180) = [protein]-peptidylproline (omega=0). In terms of biological role, PPIases accelerate the folding of proteins. It catalyzes the cis-trans isomerization of proline imidic peptide bonds in oligopeptides. The polypeptide is Peptidyl-prolyl cis-trans isomerase pin4 (ppi-5) (Neurospora crassa (strain ATCC 24698 / 74-OR23-1A / CBS 708.71 / DSM 1257 / FGSC 987)).